The chain runs to 291 residues: Bifunctional protein FolD (291 aa).

NADP(+) is bound by residues G165 to S167, S190, and I231.

It belongs to the tetrahydrofolate dehydrogenase/cyclohydrolase family. Homodimer.

It catalyses the reaction (6R)-5,10-methylene-5,6,7,8-tetrahydrofolate + NADP(+) = (6R)-5,10-methenyltetrahydrofolate + NADPH. The catalysed reaction is (6R)-5,10-methenyltetrahydrofolate + H2O = (6R)-10-formyltetrahydrofolate + H(+). The protein operates within one-carbon metabolism; tetrahydrofolate interconversion. In terms of biological role, catalyzes the oxidation of 5,10-methylenetetrahydrofolate to 5,10-methenyltetrahydrofolate and then the hydrolysis of 5,10-methenyltetrahydrofolate to 10-formyltetrahydrofolate. In Azoarcus sp. (strain BH72), this protein is Bifunctional protein FolD.